The following is a 410-amino-acid chain: ACT domain-containing protein ACR10 (410 aa).

ACT domains follow at residues V22–Q105, L114–P197, and L245–M324.

In terms of biological role, may bind amino acids. This chain is ACT domain-containing protein ACR10, found in Arabidopsis thaliana (Mouse-ear cress).